A 353-amino-acid chain; its full sequence is MSLMFDVDAAVYPFPAKPIRLSSDEKLAYRTKIKRLLQERDAVMVAHYYTDPDIQALAEETGGCVADSLEMARFGSQHSAATLLVAGVRFMGETAKILSPEKTILMPTLQAECSLDLGCPIDEFSRFCDAHPDRTVVVYANTSAAVKARADWVVTSSIAVELIEHLDSLGEKIIWAPDRHLGQYVQRQTSADILCWQSACIVHDEFKTQALQRMKLLYPEAAVLVHPESPQAIVDLADAVGSTSQLIQAAQTLPHRQMIVATDRGIFYKMQQACPDKELLEAPTAGEGATCRSCAHCPWMAMNGLKAIADGLEQGGSEHEILINDALREGALIPLNRMLTFAKDLKLKVRGNA.

His-47 and Ser-68 together coordinate iminosuccinate. Cys-113 provides a ligand contact to [4Fe-4S] cluster. Iminosuccinate is bound by residues Tyr-139 to Asn-141 and Ser-156. Residue Cys-200 participates in [4Fe-4S] cluster binding. Residues His-226–Glu-228 and Thr-243 each bind iminosuccinate. Cys-297 provides a ligand contact to [4Fe-4S] cluster.

Belongs to the quinolinate synthase family. Type 1 subfamily. [4Fe-4S] cluster is required as a cofactor.

Its subcellular location is the cytoplasm. The enzyme catalyses iminosuccinate + dihydroxyacetone phosphate = quinolinate + phosphate + 2 H2O + H(+). The protein operates within cofactor biosynthesis; NAD(+) biosynthesis; quinolinate from iminoaspartate: step 1/1. Functionally, catalyzes the condensation of iminoaspartate with dihydroxyacetone phosphate to form quinolinate. In Erwinia tasmaniensis (strain DSM 17950 / CFBP 7177 / CIP 109463 / NCPPB 4357 / Et1/99), this protein is Quinolinate synthase.